The sequence spans 181 residues: CD160 antigen (181 aa).

Positions 1–24 are cleaved as a signal peptide; it reads MLLEPGRGCCALAILLAIVDIQSG. Residues 25–133 form the Ig-like V-type domain; that stretch reads GCINITSSAS…QGHFFSILFT (109 aa). Asn-28 carries N-linked (GlcNAc...) asparagine glycosylation. 2 disulfide bridges follow: Cys-44–Cys-112 and Cys-61–Cys-68. N-linked (GlcNAc...) asparagine glycosylation occurs at Asn-137. Ser-159 carries the GPI-anchor amidated serine lipid modification. Residues 160–181 constitute a propeptide, removed in mature form; the sequence is SGFLQEKVWVMLVTSLVALQAL.

As to quaternary structure, homomultimer; disulfide-linked. Interacts with HLA-G. Interacts with HLA-A2-B2M in complex with an HIV-derived peptide. Interacts with TNFRSF14 (via cysteine-rich domain 1); this interaction is direct. Interacts with LCK and CD247/CD3 zeta chain. As to expression, expression is restricted to functional NK and cytotoxic T lymphocytes. Expressed in viral-specific effector memory and terminally differentiated effector memory CD8+ T cells. Expressed in memory and activated CD4+ T cell subsets (at protein level). Expressed at high levels in intraepithelial lymphocytes (at protein level). Expressed in both alpha-beta and gamma-delta CD8+ T cell subsets (at protein level). Expressed in umbilical vein endothelial cells (at protein level). Expressed in monocytes and at lower levels in B cells. Isoform 3: Expressed exclusively in activated NK cells (at protein level).

It localises to the cell membrane. It is found in the secreted. In terms of biological role, receptor on immune cells capable to deliver stimulatory or inhibitory signals that regulate cell activation and differentiation. Exists as a GPI-anchored and as a transmembrane form, each likely initiating distinct signaling pathways via phosphoinositol 3-kinase in activated NK cells and via LCK and CD247/CD3 zeta chain in activated T cells. Receptor for both classical and non-classical MHC class I molecules. In the context of acute viral infection, recognizes HLA-C and triggers NK cell cytotoxic activity, likely playing a role in anti-viral innate immune response. On CD8+ T cells, binds HLA-A2-B2M in complex with a viral peptide and provides a costimulatory signal to activated/memory T cells. Upon persistent antigen stimulation, such as occurs during chronic viral infection, may progressively inhibit TCR signaling in memory CD8+ T cells, contributing to T cell exhaustion. On endothelial cells, recognizes HLA-G and controls angiogenesis in immune privileged sites. Receptor or ligand for TNF superfamily member TNFRSF14, participating in bidirectional cell-cell contact signaling between antigen presenting cells and lymphocytes. Upon ligation of TNFRSF14, provides stimulatory signal to NK cells enhancing IFNG production and anti-tumor immune response. On activated CD4+ T cells, interacts with TNFRSF14 and down-regulates CD28 costimulatory signaling, restricting memory and alloantigen-specific immune response. In the context of bacterial infection, acts as a ligand for TNFRSF14 on epithelial cells, triggering the production of antimicrobial proteins and pro-inflammatory cytokines. The soluble GPI-cleaved form, usually released by activated lymphocytes, might play an immune regulatory role by limiting lymphocyte effector functions. This Homo sapiens (Human) protein is CD160 antigen.